Consider the following 130-residue polypeptide: Methylglyoxal synthase (130 aa).

The 130-residue stretch at Met-1–Cys-130 folds into the MGS-like domain. Substrate is bound by residues His-11, Lys-15, Thr-37–Thr-40, and Ser-57–Gly-58. Asp-63 (proton donor/acceptor) is an active-site residue. His-90 is a binding site for substrate.

It belongs to the methylglyoxal synthase family.

It catalyses the reaction dihydroxyacetone phosphate = methylglyoxal + phosphate. Catalyzes the formation of methylglyoxal from dihydroxyacetone phosphate. The sequence is that of Methylglyoxal synthase from Burkholderia ambifaria (strain MC40-6).